Here is a 580-residue protein sequence, read N- to C-terminus: Membrane protein insertase YidC (580 aa).

Transmembrane regions (helical) follow at residues Ser-5–Pro-25, Lys-259–Ser-279, Gly-362–Ala-382, Leu-427–Phe-447, Ile-477–Val-497, and Ile-513–Leu-533.

This sequence belongs to the OXA1/ALB3/YidC family. Type 1 subfamily. Interacts with the Sec translocase complex via SecD. Specifically interacts with transmembrane segments of nascent integral membrane proteins during membrane integration.

Its subcellular location is the cell inner membrane. Required for the insertion and/or proper folding and/or complex formation of integral membrane proteins into the membrane. Involved in integration of membrane proteins that insert both dependently and independently of the Sec translocase complex, as well as at least some lipoproteins. Aids folding of multispanning membrane proteins. This Chlorobium phaeovibrioides (strain DSM 265 / 1930) (Prosthecochloris vibrioformis (strain DSM 265)) protein is Membrane protein insertase YidC.